Reading from the N-terminus, the 483-residue chain is NADH-quinone oxidoreductase subunit N (483 aa).

The next 14 membrane-spanning stretches (helical) occupy residues isoleucine 8 to leucine 28, isoleucine 45 to glutamine 65, phenylalanine 78 to tryptophan 98, leucine 106 to isoleucine 126, phenylalanine 131 to tyrosine 151, phenylalanine 166 to valine 186, methionine 206 to alanine 226, proline 241 to phenylalanine 261, tryptophan 275 to leucine 295, leucine 303 to asparagine 323, valine 330 to valine 350, leucine 373 to phenylalanine 393, isoleucine 399 to serine 419, and alanine 452 to methionine 472.

Belongs to the complex I subunit 2 family. As to quaternary structure, NDH-1 is composed of 14 different subunits. Subunits NuoA, H, J, K, L, M, N constitute the membrane sector of the complex.

The protein resides in the cell inner membrane. It catalyses the reaction a quinone + NADH + 5 H(+)(in) = a quinol + NAD(+) + 4 H(+)(out). In terms of biological role, NDH-1 shuttles electrons from NADH, via FMN and iron-sulfur (Fe-S) centers, to quinones in the respiratory chain. The immediate electron acceptor for the enzyme in this species is believed to be ubiquinone. Couples the redox reaction to proton translocation (for every two electrons transferred, four hydrogen ions are translocated across the cytoplasmic membrane), and thus conserves the redox energy in a proton gradient. The chain is NADH-quinone oxidoreductase subunit N from Magnetococcus marinus (strain ATCC BAA-1437 / JCM 17883 / MC-1).